The following is a 281-amino-acid chain: Pantothenate synthetase (281 aa).

ATP is bound at residue 30–37; it reads MGYYHAGH. Residue His-37 is the Proton donor of the active site. Gln-61 is a (R)-pantoate binding site. Gln-61 is a binding site for beta-alanine. An ATP-binding site is contributed by 147–150; the sequence is GEKD. Gln-153 contacts (R)-pantoate. ATP contacts are provided by residues Val-176 and 184-187; that span reads MSSR.

The protein belongs to the pantothenate synthetase family. As to quaternary structure, homodimer.

Its subcellular location is the cytoplasm. It carries out the reaction (R)-pantoate + beta-alanine + ATP = (R)-pantothenate + AMP + diphosphate + H(+). The protein operates within cofactor biosynthesis; (R)-pantothenate biosynthesis; (R)-pantothenate from (R)-pantoate and beta-alanine: step 1/1. Functionally, catalyzes the condensation of pantoate with beta-alanine in an ATP-dependent reaction via a pantoyl-adenylate intermediate. The chain is Pantothenate synthetase from Oleidesulfovibrio alaskensis (strain ATCC BAA-1058 / DSM 17464 / G20) (Desulfovibrio alaskensis).